The chain runs to 135 residues: Large ribosomal subunit protein uL16m (135 aa).

This sequence belongs to the universal ribosomal protein uL16 family.

It is found in the mitochondrion. The sequence is that of Large ribosomal subunit protein uL16m (RPL16) from Marchantia polymorpha (Common liverwort).